The following is a 105-amino-acid chain: Large ribosomal subunit protein uL23 (105 aa).

It belongs to the universal ribosomal protein uL23 family. In terms of assembly, part of the 50S ribosomal subunit. Contacts protein L29, and trigger factor when it is bound to the ribosome.

One of the early assembly proteins it binds 23S rRNA. One of the proteins that surrounds the polypeptide exit tunnel on the outside of the ribosome. Forms the main docking site for trigger factor binding to the ribosome. In Janthinobacterium sp. (strain Marseille) (Minibacterium massiliensis), this protein is Large ribosomal subunit protein uL23.